A 381-amino-acid chain; its full sequence is Putative glycosyltransferase EpsD (381 aa).

Belongs to the glycosyltransferase group 1 family. Glycosyltransferase 4 subfamily.

In terms of biological role, may be involved in the production of the exopolysaccharide (EPS) component of the extracellular matrix during biofilm formation. EPS is responsible for the adhesion of chains of cells into bundles. Required for biofilm maintenance. In Bacillus subtilis (strain 168), this protein is Putative glycosyltransferase EpsD (epsD).